The sequence spans 237 residues: Phosphoribosylaminoimidazole-succinocarboxamide synthase (237 aa).

The protein belongs to the SAICAR synthetase family.

It carries out the reaction 5-amino-1-(5-phospho-D-ribosyl)imidazole-4-carboxylate + L-aspartate + ATP = (2S)-2-[5-amino-1-(5-phospho-beta-D-ribosyl)imidazole-4-carboxamido]succinate + ADP + phosphate + 2 H(+). It functions in the pathway purine metabolism; IMP biosynthesis via de novo pathway; 5-amino-1-(5-phospho-D-ribosyl)imidazole-4-carboxamide from 5-amino-1-(5-phospho-D-ribosyl)imidazole-4-carboxylate: step 1/2. The chain is Phosphoribosylaminoimidazole-succinocarboxamide synthase from Pseudomonas fluorescens (strain ATCC BAA-477 / NRRL B-23932 / Pf-5).